The primary structure comprises 122 residues: Large ribosomal subunit protein uL18 (122 aa).

Belongs to the universal ribosomal protein uL18 family. Part of the 50S ribosomal subunit; part of the 5S rRNA/L5/L18/L25 subcomplex. Contacts the 5S and 23S rRNAs.

Its function is as follows. This is one of the proteins that bind and probably mediate the attachment of the 5S RNA into the large ribosomal subunit, where it forms part of the central protuberance. The sequence is that of Large ribosomal subunit protein uL18 from Fervidobacterium nodosum (strain ATCC 35602 / DSM 5306 / Rt17-B1).